The primary structure comprises 235 residues: Isoprenyl transferase (235 aa).

The active site involves Asp21. Asp21 contacts Mg(2+). Substrate is bound by residues 22–25, Trp26, Lys34, His38, and 66–68; these read GNAR and SSE. Catalysis depends on Asn69, which acts as the Proton acceptor. Substrate-binding positions include Trp70, Arg72, Arg183, and 189–191; that span reads RIS. Glu202 serves as a coordination point for Mg(2+).

The protein belongs to the UPP synthase family. In terms of assembly, homodimer. Mg(2+) serves as cofactor.

Functionally, catalyzes the condensation of isopentenyl diphosphate (IPP) with allylic pyrophosphates generating different type of terpenoids. The protein is Isoprenyl transferase of Rickettsia conorii (strain ATCC VR-613 / Malish 7).